The chain runs to 507 residues: Probable cytosol aminopeptidase (507 aa).

Mn(2+) is bound by residues K254 and D259. Residue K266 is part of the active site. Mn(2+) is bound by residues D277, D336, and E338. Residue R340 is part of the active site. Residues 486–507 form a disordered region; the sequence is PRKAQPKARSAKRSKPVSRTRA. Over residues 489 to 507 the composition is skewed to basic residues; that stretch reads AQPKARSAKRSKPVSRTRA.

This sequence belongs to the peptidase M17 family. Mn(2+) serves as cofactor.

Its subcellular location is the cytoplasm. The catalysed reaction is Release of an N-terminal amino acid, Xaa-|-Yaa-, in which Xaa is preferably Leu, but may be other amino acids including Pro although not Arg or Lys, and Yaa may be Pro. Amino acid amides and methyl esters are also readily hydrolyzed, but rates on arylamides are exceedingly low.. It catalyses the reaction Release of an N-terminal amino acid, preferentially leucine, but not glutamic or aspartic acids.. Presumably involved in the processing and regular turnover of intracellular proteins. Catalyzes the removal of unsubstituted N-terminal amino acids from various peptides. The polypeptide is Probable cytosol aminopeptidase (Polaromonas sp. (strain JS666 / ATCC BAA-500)).